Reading from the N-terminus, the 309-residue chain is Coenzyme PQQ synthesis protein B (309 aa).

This sequence belongs to the PqqB family.

It participates in cofactor biosynthesis; pyrroloquinoline quinone biosynthesis. Functionally, may be involved in the transport of PQQ or its precursor to the periplasm. This chain is Coenzyme PQQ synthesis protein B, found in Nitrosococcus oceani (strain ATCC 19707 / BCRC 17464 / JCM 30415 / NCIMB 11848 / C-107).